The following is a 124-amino-acid chain: Small ribosomal subunit protein uS12 (124 aa).

Residues 1–25 (MPTINQLIRKPRKSQKEKTASPALQ) are disordered. Position 89 is a 3-methylthioaspartic acid (D89).

This sequence belongs to the universal ribosomal protein uS12 family. In terms of assembly, part of the 30S ribosomal subunit. Contacts proteins S8 and S17. May interact with IF1 in the 30S initiation complex.

In terms of biological role, with S4 and S5 plays an important role in translational accuracy. Its function is as follows. Interacts with and stabilizes bases of the 16S rRNA that are involved in tRNA selection in the A site and with the mRNA backbone. Located at the interface of the 30S and 50S subunits, it traverses the body of the 30S subunit contacting proteins on the other side and probably holding the rRNA structure together. The combined cluster of proteins S8, S12 and S17 appears to hold together the shoulder and platform of the 30S subunit. This is Small ribosomal subunit protein uS12 from Borrelia turicatae (strain 91E135).